A 406-amino-acid chain; its full sequence is 26S proteasome regulatory subunit 8 (406 aa).

Residue Ala2 is modified to N-acetylalanine. Ser120 bears the Phosphoserine mark. The interval 186–406 is may mediate interaction with PRPF9; the sequence is VLLYGPPGTG…KNMSIKKLWK (221 aa). An ATP-binding site is contributed by 190 to 197; that stretch reads GPPGTGKT. Lys222 is subject to N6-acetyllysine.

It belongs to the AAA ATPase family. As to quaternary structure, component of the 19S proteasome regulatory particle complex. The 26S proteasome consists of a 20S core particle (CP) and two 19S regulatory subunits (RP). The regulatory particle is made of a lid composed of 9 subunits, a base containing 6 ATPases including PSMC5 and few additional components. Component of a complex with USP49 and RUVBL1. Interacts with PRPF19. Interacts with TRIM5. Interacts with NDC80. Interacts with PAAF1. Interacts, in vitro, with the thyroid hormone receptor (in a thyroid hormone T3-dependent manner) and with retinoid X receptor (RXR). Interacts with ERCC6.

The protein resides in the cytoplasm. Its subcellular location is the nucleus. Component of the 26S proteasome, a multiprotein complex involved in the ATP-dependent degradation of ubiquitinated proteins. This complex plays a key role in the maintenance of protein homeostasis by removing misfolded or damaged proteins, which could impair cellular functions, and by removing proteins whose functions are no longer required. Therefore, the proteasome participates in numerous cellular processes, including cell cycle progression, apoptosis, or DNA damage repair. PSMC5 belongs to the heterohexameric ring of AAA (ATPases associated with diverse cellular activities) proteins that unfolds ubiquitinated target proteins that are concurrently translocated into a proteolytic chamber and degraded into peptides. This Bos taurus (Bovine) protein is 26S proteasome regulatory subunit 8 (PSMC5).